The following is a 3994-amino-acid chain: MSPSIPEPIAIVGSSCRFPGSSSSPSKLWDLLREPRDVRRNLSQNLNLQRFYHPSGENHGSTDVKGLGYLLAEDSRLFDPAVFGISPYEAETIDPQQRILLEIVYESMENAGYTLAQMRGSQTSVHVGVMTDDYHDIQLRDVESLPQYTSTGTARSMMANRISYVFDLHGPSVTIDTACSSSLVALHQAVQSLQLGEATCAVVGGVNLIFDPAMYVAESNLHMLSPDSQSRMWDKTANGYARGEGAAAVLLKPLSQALRDNDHIEGLIRGSGVNSDGQSPGITMPTATAQAALIRATYKRAGLDPIKDRCQYFECHGTGTAAGDPVEAQAISEALFEEATFTNEATDTPPLYVGSIKTVTGHLEGCAGLAGLLKALVSIKNRIIPPNMLFNELNPKIEPYYGRMQITTVPIPWPNVGTGAPLRVSINSFGFGGTNSHVILESYESSGQRNLELASKKNALLGPIVLSAHSGASLLGNAKNMLQYLKDNPSVNLSDLSYVLQTRRTAHRARAFFSSSSHQGLINKLQDFVGDNEKISKKSTIGIRHKPVNSSETPGILGVFTGQGAQWPRMGRMLLDHCPLFRDVLERCDATLQALPDHPEWLLVDELCKHAEVSRVGEAAISQPLCTAIQLGLLEVLFSSGIHFDAVVGHSSGEIAAVYACGIISLSAAMQIAFYRGRYASLAQGANGEVGAMMAVGISHREAQKFCQKSEYQGHISVAASNGVQSVTLSGDSEFIQQAKEHFESENVFARLLKVDTAYHSQHMKRCAGPYLQSLEACNIQVRQPREGCFWNSSVRGDTELLRGDLRSLKGPYWVQNMVQTVLFSQAVRSSIWHGGPYDVVIEVGPHPALKGPTEQTLQSAFGATPTYTGVLKRDSNDVEALFDAIGVVWAHLGPQFVNFEGLWRTLVPDSTQLSPRLLKDLPKYSWDHERVYWRESRISARFRRGNDVFHELLGRRTHDDTDRELRWRNILKLSELPWVQGHTIMGEALLPGASYVALAFQAGHAIAAGRRVQLMEVQDVEIRRPIVVPDSREGQDTIFTVHLLDARDPNMIEGHFSYCYCSDTSTGAMVRTCEGRLIIHLGETTGDELPPYTPPPPNLLSVDTDEGYEVLAQAGLLYSGIFRRLQDVERRLDFAEAKAQWATEELRGEYVVHPALLDVSFQSIFHARADPSTGKLPVSVLPVHIKRVVVNPKATLGAQMGTIRTMTQSFVTARDGLSLSGDIHVFDAMTGEAALQVEALSVKPMAPPTAEQDTRLFFDTVFMADPSLNLLEPQRNPVDDTRDMALVSDIDRVVLYYVQRVLEQLDPEEVAGFSWYFKRMLDAYEYWVQLVRADRHPVAPSSWLADEFEVIDEIYTRWPGQIELEIARAIGENIVDVMHGKMQMLEVLMENDRLGRMYYEGCGFTIVNAGLRNVMEQISNKYPQAKYLEIGAGTGSASHAILSSIGTTFDNYTYTDISTGFFENAAKRFAQFSHKMLFKTLDVEKDVVAQGYDMHSYDVVVASNVLHATGNLQLTLENVRSLLKPGGFLLLIEITGIEIMRVGYIMGGLPGWWLGAKEGRRFHPGLTTEDWDRTLQDTGYSGVDLAFHDLPDSDRHCMSLLVSQAVDETVLQLREPLGYIEDVPKTDNLLLIGGRTLPISKLTSTVQRLAGSSWRSRVVVARDIEAVDFSLLSSSVDVVCLQELDAPLFSNFITTKRLEALQAIILHSRNVLWVTKSRRAENPYQNMFLGMARAIWKEMAHVTIQSLDVETITNPNNVARTILETFLRMKILSGVDNQSTLLWTREQELIIEGGETLIARLRPNQELNDRYNARYRTVTKSVNGSHAAIRLIQQGDKMAFTETDDHHPADTIEHVTVKTSFSLTVPGDSSQGSTYLVVGREIDVGTPLLAVSHIDASVLRVPQTDTIPIDEASCNELFLERFLNNIFSDTLLNLIAAGGSVTLYQPRNGLAAVIAATAEDRGIEVFFVCSTSGDVAVPENWIWMHPHSSPRIIRSLLPRNDSIFVNCSGLSNYLTSAIHSVLPSHLPVLELESWVFQTGLSVLRGCGSLAAGYDSLLSRLPRLNAALPLSGDLPLFNMDQIAGAKASTQEITHITSWEKAKDFLTLVVQPPDPTTMFDARKTYLMVGMAGGLGLSICEWALRHGAKQMVITSRNPEIHSQWLADARHKGTIVHVKSMDVTDRASVDTTVRWIQDTLPPIAGVCNAAMVLTDRMFANMDADAINRTLNPKVNGSKYLDEVFANTPLDFFILLSSCGAIMGSKGQSNYHAANMYMSALATQRRERGFAASIIHIGFVTDVGYTTRNKGTLKDVWAQFEFRFLSEMDVHHAFAEAIVSGRPNSHRSCEVGVGINPLTEPFTADRKPAWASDPRFSHYLPSTNLQNEVVARSRQEDLKERLMDVSTEDEAVEITQKAFSSKLETMMQLPVGSLSVQASLIELGIDSLVAVDIRNWFLRELGADIPVLKILGGDSVAQICTNAAKQLLAQKGGQEPSEQEEVEPESTTLHVSQGSLHTPSEGLEFTETSSVGGTENTPLTSASSSPSVTDTVEKRDKGDISVDEGPNEQFDPDDRDYNPDIIETERLSSGQSRIYILSRFLNNPTDYNLVFQFEIDGCLDMELLRDAFTVTTQHHESLRTCYFVRQEDNQPMQGVLASPVVRFQHVPDATADEIAAEVALGKSRVWDLERGETMAMTVFSLSPQSHTMVFSYHHIIMDSTGWRVFFQDLALAYHMEPLQHASKTYVEYTRKQIAQQQTGHFQSQLQYWKQEYSSFPPVLPLLPMSRVKTRPNAQSSGITYSRLEIGYEVAQAMKASCQKLRITAFHFHLAVFQVMLSQLAGIDDICIGVADANRLDGEFAETVGFFMNMLPVRFHVSPNAKFSQIAQGTARKVLGAVQNSAVPFDMILDDLHVARSSSHTPLFQAAINYQLRVAKKLPFAGSSLTLFDAQDAKNPYDLSLGIIEYHSEGFILDMSCQESLYDAAATRTILETYVQILEGVVSNTYMTVAKIPIHAPIAVIDAVRLGQGPQVDFSWPATLSQQFQAIHETNREDLAICDGDQSLTYDQLTDRVNSIASALKTVGHTTSLRVAVLCRPSVDFTASMLAILHIGALYIPLDISLPPARHAAIIDSARPSVVICHDATIELASQLGAGSEGNRMPIIRVDDVEVAKERVPCNARPEAPAVLLYTSGSVGKPKGVVLTQANFVNHIALKIHELNLRLGCEKILQQSSLGFDMSIIQIFCALCTGGTLFIVPYESRRDALHITQLMSKHRITITIATPSEYLTWLHYGWDSLVQCFDWRWACMGGEVVQPPLMREFQRLGLASLSCLNCYGPTEITAAATFHRISLKEDVLKLESTVGKAIPNYTLRIVDFSGRTQPVGFRGEICIGGAGLALGYWESLEETARAFFVDGSSTRWYRTGDQGRLTADGSLVFLGRLEGSTQVKVRGLRIELEEVEKALLEVGASLFSTVVVTVRDDALMAYATPLVNQGDDIEPAIITELLAGLPLPQYMCPSQVIIVDDLPCNSNGKIDRNALATLPFSAPSQGLFNPQTAPKLSLRQSELRILWEKVLPPTSHPLMAESDFFLEGGNSLRLLKLQHAIKESMGTSITTRELYEASTLQKMTMLVDLERDRQTVKSKLIDWEAETAIPESLITIAQDAIGAVKRSPVDDDEVVEVLMTGATGFLGGSILKELLQNVHIRRVHCVAILPDEQGHLPSDSKVVHYTGSLSSPTLGLSPSECLALQESIDVVIHAGANGHCLNNYTSVREANVHPTQFLASLCVPHSIPLLYISSPRVPLLTGNTAPLPGPVPTQPPTTGAEGYTASKWASEQFLQRMSNHASMRIEIHRPCVVIGDQAPASDALNAILRYSLKMKCLPKFSRVEGFFDFKKVEEVAQDLVSSTVALGLGRGRSQTGREAKVHFQHHSSGKKVAFSAMAKHMKEMYGEEFSEMEILDWLERALKEGMDPLISSYLESLVENGDTLQFPYLGEVHSS.

Residues 6–442 form the Ketosynthase family 3 (KS3) domain; the sequence is PEPIAIVGSS…GTNSHVILES (437 aa). Catalysis depends on for beta-ketoacyl synthase activity residues C179, H316, and H362. A malonyl-CoA:ACP transacylase (MAT) domain region spans residues 559 to 881; sequence VFTGQGAQWP…LKRDSNDVEA (323 aa). The N-terminal hotdog fold stretch occupies residues 951–1085; that stretch reads HELLGRRTHD…GRLIIHLGET (135 aa). The segment at 951–1251 is dehydratase (DH) domain; that stretch reads HELLGRRTHD…SVKPMAPPTA (301 aa). Residues 951–1252 enclose the PKS/mFAS DH domain; that stretch reads HELLGRRTHD…VKPMAPPTAE (302 aa). The Proton acceptor; for dehydratase activity role is filled by H983. A C-terminal hotdog fold region spans residues 1100–1252; the sequence is LLSVDTDEGY…VKPMAPPTAE (153 aa). The Proton donor; for dehydratase activity role is filled by D1159. The segment at 1292-1593 is methyltransferase (MT) domain; the sequence is DRVVLYYVQR…VDLAFHDLPD (302 aa). The interval 2123 to 2297 is ketoreductase (KR) domain; that stretch reads TYLMVGMAGG…ASIIHIGFVT (175 aa). A Carrier 1 domain is found at 2406–2483; sequence EAVEITQKAF…QICTNAAKQL (78 aa). S2443 carries the post-translational modification O-(pantetheine 4'-phosphoryl)serine. The disordered stretch occupies residues 2486–2575; it reads QKGGQEPSEQ…FDPDDRDYNP (90 aa). Polar residues-rich tracts occupy residues 2505-2514 and 2522-2546; these read LHVSQGSLHT and TETSSVGGTENTPLTSASSSPSVTD. The span at 2547–2556 shows a compositional bias: basic and acidic residues; that stretch reads TVEKRDKGDI. The span at 2557 to 2570 shows a compositional bias: acidic residues; the sequence is SVDEGPNEQFDPDD. Residues 2582-3007 form a condensation (C) domain region; that stretch reads RLSSGQSRIY…SNTYMTVAKI (426 aa). The segment at 3043-3436 is adenylation (A) (KR) domain; it reads HETNREDLAI…DGSLVFLGRL (394 aa). Positions 3553–3630 constitute a Carrier 2 domain; that stretch reads PKLSLRQSEL…KMTMLVDLER (78 aa). An O-(pantetheine 4'-phosphoryl)serine modification is found at S3590. The tract at residues 3679 to 3895 is reductase (RED) domain; the sequence is TGATGFLGGS…FDFKKVEEVA (217 aa).

In the C-terminal section; belongs to the NRP synthetase family. It depends on pantetheine 4'-phosphate as a cofactor.

The protein operates within secondary metabolite biosynthesis. Hybrid PKS-NRPS synthetase; part of the gene cluster that mediates the biosynthesis of oxopyrrolidines, polyketide-amino acid hybrid compounds with feature structures of tetramic acid. The polyketide chain is first assembled by the highly reducing PKS module of opdA using acetyl-CoA as the starter unit and five malonyl-CoA as the extender units. OpdC acts as trans-acting enoyl reductase and reduces the terminal alkenyl to alkane. The 17R in oxopyrrolidine A and 15R, 17S in oxopyrrolidine B are generated by non-stereospecific catalysis of the ketoreductase (KR) domain and enoyl reductases. Then the polyketides with specific configurations are transferred to the NRPS module of opdA and linked to L-tyrosine to form an amide bond. Finally, the oxopyrrolidines are offloaded through a Dieckmann cyclization catalyzed by the terminal D domain to give a tetramic acid moiety. The sequence is that of Hybrid PKS-NRPs synthetase opdA from Penicillium oxalicum (strain 114-2 / CGMCC 5302) (Penicillium decumbens).